A 546-amino-acid chain; its full sequence is MFS-type transporter GME11371 (546 aa).

The next 7 membrane-spanning stretches (helical) occupy residues 39-59 (LTYL…DLTI), 77-96 (IGWY…SSWG), 107-127 (MFLL…AAPT), 137-157 (ITGI…AFAV), 167-187 (GGLA…GGVL), 195-215 (WCFY…FLFF), and 240-260 (FPGF…LLWG). N-linked (GlcNAc...) asparagine glycosylation occurs at Asn-267. The next 7 helical transmembrane spans lie at 270 to 290 (DVIG…VVEW), 307 to 327 (VVLF…VLVY), 349 to 369 (LPYI…ISAT), 370 to 390 (GYFT…AGLI), 402 to 422 (WIGY…PPIL), 433 to 453 (VAAT…FMVS), and 509 to 529 (ISFA…IFMP).

Belongs to the major facilitator superfamily.

The protein localises to the cell membrane. Its pathway is secondary metabolite biosynthesis. Functionally, MFS-type transporter; part of the gene cluster that mediates the biosynthesis of dibenzodioxocinones such as pestalotiollide B, a novel class of inhibitors against cholesterol ester transfer protein (CEPT). essential for dibenzodioxocinones biosynthesis and may be involved in the secretion of the cluster products. The protein is MFS-type transporter GME11371 of Pestalotiopsis microspora.